The following is a 339-amino-acid chain: Ketol-acid reductoisomerase (NADP(+)) (339 aa).

The 182-residue stretch at Met-1 to Thr-182 folds into the KARI N-terminal Rossmann domain. Residues Tyr-24–Gln-27, Arg-48, Ser-51, Thr-53, and Asp-83–Gln-86 each bind NADP(+). The active site involves His-108. Gly-134 is an NADP(+) binding site. Residues Asn-183 to Ile-328 form the KARI C-terminal knotted domain. The Mg(2+) site is built by Asp-191, Glu-195, Glu-227, and Glu-231. A substrate-binding site is contributed by Ser-252.

Belongs to the ketol-acid reductoisomerase family. Mg(2+) is required as a cofactor.

It catalyses the reaction (2R)-2,3-dihydroxy-3-methylbutanoate + NADP(+) = (2S)-2-acetolactate + NADPH + H(+). It carries out the reaction (2R,3R)-2,3-dihydroxy-3-methylpentanoate + NADP(+) = (S)-2-ethyl-2-hydroxy-3-oxobutanoate + NADPH + H(+). It functions in the pathway amino-acid biosynthesis; L-isoleucine biosynthesis; L-isoleucine from 2-oxobutanoate: step 2/4. Its pathway is amino-acid biosynthesis; L-valine biosynthesis; L-valine from pyruvate: step 2/4. In terms of biological role, involved in the biosynthesis of branched-chain amino acids (BCAA). Catalyzes an alkyl-migration followed by a ketol-acid reduction of (S)-2-acetolactate (S2AL) to yield (R)-2,3-dihydroxy-isovalerate. In the isomerase reaction, S2AL is rearranged via a Mg-dependent methyl migration to produce 3-hydroxy-3-methyl-2-ketobutyrate (HMKB). In the reductase reaction, this 2-ketoacid undergoes a metal-dependent reduction by NADPH to yield (R)-2,3-dihydroxy-isovalerate. The protein is Ketol-acid reductoisomerase (NADP(+)) of Caulobacter vibrioides (strain ATCC 19089 / CIP 103742 / CB 15) (Caulobacter crescentus).